The sequence spans 290 residues: Acetyl-coenzyme A carboxylase carboxyl transferase subunit beta (290 aa).

Residues 27-290 enclose the CoA carboxyltransferase N-terminal domain; that stretch reads LWVKCPSCES…LQKQPADAVA (264 aa). Zn(2+) is bound by residues C31, C34, C50, and C53. The C4-type zinc finger occupies 31–53; sequence CPSCESTLYRTDVEANLHVCPKC.

It belongs to the AccD/PCCB family. Acetyl-CoA carboxylase is a heterohexamer composed of biotin carboxyl carrier protein (AccB), biotin carboxylase (AccC) and two subunits each of ACCase subunit alpha (AccA) and ACCase subunit beta (AccD). Zn(2+) is required as a cofactor.

It localises to the cytoplasm. The catalysed reaction is N(6)-carboxybiotinyl-L-lysyl-[protein] + acetyl-CoA = N(6)-biotinyl-L-lysyl-[protein] + malonyl-CoA. It functions in the pathway lipid metabolism; malonyl-CoA biosynthesis; malonyl-CoA from acetyl-CoA: step 1/1. Its function is as follows. Component of the acetyl coenzyme A carboxylase (ACC) complex. Biotin carboxylase (BC) catalyzes the carboxylation of biotin on its carrier protein (BCCP) and then the CO(2) group is transferred by the transcarboxylase to acetyl-CoA to form malonyl-CoA. The polypeptide is Acetyl-coenzyme A carboxylase carboxyl transferase subunit beta (Cupriavidus taiwanensis (strain DSM 17343 / BCRC 17206 / CCUG 44338 / CIP 107171 / LMG 19424 / R1) (Ralstonia taiwanensis (strain LMG 19424))).